Here is a 201-residue protein sequence, read N- to C-terminus: 3-isopropylmalate dehydratase small subunit (201 aa).

The protein belongs to the LeuD family. LeuD type 1 subfamily. In terms of assembly, heterodimer of LeuC and LeuD.

The enzyme catalyses (2R,3S)-3-isopropylmalate = (2S)-2-isopropylmalate. It functions in the pathway amino-acid biosynthesis; L-leucine biosynthesis; L-leucine from 3-methyl-2-oxobutanoate: step 2/4. Catalyzes the isomerization between 2-isopropylmalate and 3-isopropylmalate, via the formation of 2-isopropylmaleate. The chain is 3-isopropylmalate dehydratase small subunit from Shewanella denitrificans (strain OS217 / ATCC BAA-1090 / DSM 15013).